The following is a 559-amino-acid chain: Myb/SANT-like DNA-binding domain-containing protein 2 (559 aa).

The disordered stretch occupies residues 1-62 (MAAPCGSELP…GSAAGSGAAA (62 aa)). Ser13, Ser24, Ser27, Ser32, and Ser48 each carry phosphoserine. Residues 46-61 (GASPLGPGSAAGSGAA) are compositionally biased toward low complexity. A Myb-like domain is found at 103 to 173 (SWTPAETNAL…QCRERIKTLR (71 aa)). Glycyl lysine isopeptide (Lys-Gly) (interchain with G-Cter in SUMO2) cross-links involve residues Lys268 and Lys343. The residue at position 436 (Ser436) is a Phosphoserine.

This Mus musculus (Mouse) protein is Myb/SANT-like DNA-binding domain-containing protein 2 (Msantd2).